Consider the following 417-residue polypeptide: Serine hydroxymethyltransferase (417 aa).

Residues L121 and 125–127 (GHL) each bind (6S)-5,6,7,8-tetrahydrofolate. At K229 the chain carries N6-(pyridoxal phosphate)lysine. 355–357 (SPF) contributes to the (6S)-5,6,7,8-tetrahydrofolate binding site.

Belongs to the SHMT family. Homodimer. Pyridoxal 5'-phosphate serves as cofactor.

The protein localises to the cytoplasm. It catalyses the reaction (6R)-5,10-methylene-5,6,7,8-tetrahydrofolate + glycine + H2O = (6S)-5,6,7,8-tetrahydrofolate + L-serine. Its pathway is one-carbon metabolism; tetrahydrofolate interconversion. It functions in the pathway amino-acid biosynthesis; glycine biosynthesis; glycine from L-serine: step 1/1. Functionally, catalyzes the reversible interconversion of serine and glycine with tetrahydrofolate (THF) serving as the one-carbon carrier. This reaction serves as the major source of one-carbon groups required for the biosynthesis of purines, thymidylate, methionine, and other important biomolecules. Also exhibits THF-independent aldolase activity toward beta-hydroxyamino acids, producing glycine and aldehydes, via a retro-aldol mechanism. The sequence is that of Serine hydroxymethyltransferase from Salmonella paratyphi C (strain RKS4594).